The primary structure comprises 166 residues: Twist-related protein (166 aa).

Positions 1–18 (MMQEESSSPVSPVDSLSN) are enriched in low complexity. Residues 1-83 (MMQEESSSPV…RVMANVRERQ (83 aa)) are disordered. Over residues 28–39 (SKRGCRKRRSAR) the composition is skewed to basic residues. The segment covering 57–75 (ASSTGSSPQSFEELQSQRV) has biased composition (polar residues). The 52-residue stretch at 72–123 (SQRVMANVRERQRTQSLNEAFSSLRKIIPTLPSDKLSKIQTLKLASRYIDFL) folds into the bHLH domain.

In terms of assembly, efficient DNA binding requires dimerization with another bHLH protein. Homodimer. Subset of mesodermal cells.

The protein resides in the nucleus. Its function is as follows. Probable transcription factor, which may be involved, with other proteins, in establishing the pattern of cell type-specific gene expression in mesodermal cell subgroups. This Xenopus laevis (African clawed frog) protein is Twist-related protein (twist1).